A 289-amino-acid polypeptide reads, in one-letter code: Proteasome subunit beta (289 aa).

A propeptide spans methionine 1–alanine 55 (removed in mature form; by autocatalysis). Threonine 56 serves as the catalytic Nucleophile.

Belongs to the peptidase T1B family. As to quaternary structure, the 20S proteasome core is composed of 14 alpha and 14 beta subunits that assemble into four stacked heptameric rings, resulting in a barrel-shaped structure. The two inner rings, each composed of seven catalytic beta subunits, are sandwiched by two outer rings, each composed of seven alpha subunits. The catalytic chamber with the active sites is on the inside of the barrel. Has a gated structure, the ends of the cylinder being occluded by the N-termini of the alpha-subunits. Is capped by the proteasome-associated ATPase, ARC.

Its subcellular location is the cytoplasm. It catalyses the reaction Cleavage of peptide bonds with very broad specificity.. It functions in the pathway protein degradation; proteasomal Pup-dependent pathway. With respect to regulation, the formation of the proteasomal ATPase ARC-20S proteasome complex, likely via the docking of the C-termini of ARC into the intersubunit pockets in the alpha-rings, may trigger opening of the gate for substrate entry. Interconversion between the open-gate and close-gate conformations leads to a dynamic regulation of the 20S proteasome proteolysis activity. Component of the proteasome core, a large protease complex with broad specificity involved in protein degradation. The polypeptide is Proteasome subunit beta (Mycobacterium marinum (strain ATCC BAA-535 / M)).